Consider the following 106-residue polypeptide: uncharacterized protein (106 aa).

Helical transmembrane passes span 46–68 and 73–92; these read LLQEIILFVFCALMVVSAAILAF and AVFIVLQVCVLAVLPILIAA.

The protein localises to the cell membrane. This is an uncharacterized protein from Bacillus subtilis (strain 168).